The chain runs to 221 residues: Endonuclease V (221 aa).

Mg(2+) contacts are provided by Asp44 and Asp112.

The protein belongs to the endonuclease V family. It depends on Mg(2+) as a cofactor.

Its subcellular location is the cytoplasm. It catalyses the reaction Endonucleolytic cleavage at apurinic or apyrimidinic sites to products with a 5'-phosphate.. Its function is as follows. DNA repair enzyme involved in the repair of deaminated bases. Selectively cleaves double-stranded DNA at the second phosphodiester bond 3' to a deoxyinosine leaving behind the intact lesion on the nicked DNA. The protein is Endonuclease V of Nostoc punctiforme (strain ATCC 29133 / PCC 73102).